Consider the following 305-residue polypeptide: GMP synthase [glutamine-hydrolyzing] subunit B (305 aa).

The GMPS ATP-PPase domain maps to 2–185 (VNVDEFIEEA…LDLEEIISER (184 aa)). 29–35 (SGGVDSS) is a binding site for ATP.

Heterodimer composed of a glutamine amidotransferase subunit (A) and a GMP-binding subunit (B).

The enzyme catalyses XMP + L-glutamine + ATP + H2O = GMP + L-glutamate + AMP + diphosphate + 2 H(+). It participates in purine metabolism; GMP biosynthesis; GMP from XMP (L-Gln route): step 1/1. Functionally, catalyzes the synthesis of GMP from XMP. This Haloarcula marismortui (strain ATCC 43049 / DSM 3752 / JCM 8966 / VKM B-1809) (Halobacterium marismortui) protein is GMP synthase [glutamine-hydrolyzing] subunit B.